Here is a 327-residue protein sequence, read N- to C-terminus: Vacuolar protein sorting-associated protein 26A (327 aa).

The disordered stretch occupies residues 305 to 327 (RNFHQRYESPEPRPSLSAEQPEM).

Belongs to the VPS26 family. Component of the heterotrimeric retromer cargo-selective complex (CSC) which is believed to associate with variable sorting nexins to form functionally distinct retromer complex variants.

The protein resides in the cytoplasm. Its subcellular location is the endosome membrane. The protein localises to the early endosome. Its function is as follows. Acts as a component of the retromer cargo-selective complex (CSC). The CSC is believed to be the core functional component of retromer or respective retromer complex variants acting to prevent missorting of selected transmembrane cargo proteins into the lysosomal degradation pathway. Retromer mediates retrograde transport of cargo proteins from endosomes to the trans-Golgi network (TGN). This is Vacuolar protein sorting-associated protein 26A (vps26a) from Danio rerio (Zebrafish).